Reading from the N-terminus, the 230-residue chain is Large ribosomal subunit protein uL1 (230 aa).

Belongs to the universal ribosomal protein uL1 family. In terms of assembly, part of the 50S ribosomal subunit.

In terms of biological role, binds directly to 23S rRNA. The L1 stalk is quite mobile in the ribosome, and is involved in E site tRNA release. Its function is as follows. Protein L1 is also a translational repressor protein, it controls the translation of the L11 operon by binding to its mRNA. This chain is Large ribosomal subunit protein uL1, found in Desulfitobacterium hafniense (strain DSM 10664 / DCB-2).